Here is a 517-residue protein sequence, read N- to C-terminus: Perilipin-1 (517 aa).

Ser-81 is subject to Phosphoserine. Thr-85 bears the Phosphothreonine mark. Phosphoserine is present on residues Ser-126, Ser-130, Ser-132, Ser-137, and Ser-174. Residues 195-216 are disordered; it reads DKESAPSSGRQRTQKAPKAKPS. Phosphothreonine is present on residues Thr-223, Thr-298, and Thr-300. Residues 286-320 form a disordered region; sequence LAASQDESHDDQTDTEGEETDDEEEEEESEAEENV. Residues 290 to 321 form a required for interaction with CIDEC region; the sequence is QDESHDDQTDTEGEETDDEEEEEESEAEENVL. The segment covering 298–318 has biased composition (acidic residues); it reads TDTEGEETDDEEEEEESEAEE. Ser-314, Ser-384, Ser-386, Ser-410, Ser-433, Ser-439, Ser-460, Ser-492, and Ser-494 each carry phosphoserine. The segment at 425–490 is disordered; it reads SAEAERKGSG…AMPREKPARR (66 aa).

Belongs to the perilipin family. Interacts with ABHD5. Interacts with CIDEC. Interacts with AQP7. In terms of processing, major cAMP-dependent protein kinase-substrate in adipocytes, also dephosphorylated by PP1. When phosphorylated, may be maximally sensitive to HSL and when unphosphorylated, may play a role in the inhibition of lipolysis, by acting as a barrier in lipid droplet.

It is found in the endoplasmic reticulum. The protein resides in the lipid droplet. Modulator of adipocyte lipid metabolism. Coats lipid storage droplets to protect them from breakdown by hormone-sensitive lipase (HSL). Its absence may result in leanness. Plays a role in unilocular lipid droplet formation by activating CIDEC. Their interaction promotes lipid droplet enlargement and directional net neutral lipid transfer. May modulate lipolysis and triglyceride levels. The polypeptide is Perilipin-1 (Plin1) (Mus musculus (Mouse)).